A 450-amino-acid chain; its full sequence is MDSTFNELGVSPALIATLKDNNINQPTTIQQLAIPQFLQHQNLIVHSPTGTGKTAVFGIPVIETLLKKPSKGTTQTLVVAPTRELAEQIKTTFINFAKHTHLKVVSLIGGIPIWQQLKQLENQPEIVVGTMGRVMDLLERGVIKFEHLEHLIIDEVDLMLDRGFKRKLFDLLSRIEKFEQIAVYSASYNEETIETAKQITKNGIFLAAPELKQNAPEPDNKLIDQFVCYLFSNRKKQALYSLVSQTRAKSIIVFCDTKKLVDELCIFLRKNDVKTYPLHGDKAQFIRERNLKLFANTTAPIVLVTTDLIGRGIHVEGVDMVVNYSACVNFETYLHRMGRTGRNNHKGSCITFCTSHEKQAFLKLLEQVNDKRISPLRPMRLRLIPLKCKTQPKKGKLSLQSVQKIYVNPRSNGTFKRVPLAGDLFKSRMRQPERDMQKNKLHDSDWQSNM.

The Q motif signature appears at 3-31 (STFNELGVSPALIATLKDNNINQPTTIQQ). The Helicase ATP-binding domain maps to 34–206 (IPQFLQHQNL…KQITKNGIFL (173 aa)). 47–54 (SPTGTGKT) is an ATP binding site. The short motif at 154-157 (DEVD) is the DEVD box element. Residues 234 to 384 (RKKQALYSLV…PLRPMRLRLI (151 aa)) form the Helicase C-terminal domain. Positions 429 to 450 (MRQPERDMQKNKLHDSDWQSNM) are disordered. The span at 430–450 (RQPERDMQKNKLHDSDWQSNM) shows a compositional bias: basic and acidic residues.

This sequence belongs to the DEAD box helicase family.

The catalysed reaction is ATP + H2O = ADP + phosphate + H(+). The chain is Probable ATP-dependent RNA helicase MG425 homolog from Mycoplasma pneumoniae (strain ATCC 29342 / M129 / Subtype 1) (Mycoplasmoides pneumoniae).